The primary structure comprises 84 residues: Large ribosomal subunit protein bL31B (84 aa).

This sequence belongs to the bacterial ribosomal protein bL31 family. Type B subfamily. In terms of assembly, part of the 50S ribosomal subunit.

The sequence is that of Large ribosomal subunit protein bL31B from Phocaeicola vulgatus (strain ATCC 8482 / DSM 1447 / JCM 5826 / CCUG 4940 / NBRC 14291 / NCTC 11154) (Bacteroides vulgatus).